We begin with the raw amino-acid sequence, 86 residues long: Small ribosomal subunit protein bS20 (86 aa).

It belongs to the bacterial ribosomal protein bS20 family.

In terms of biological role, binds directly to 16S ribosomal RNA. This is Small ribosomal subunit protein bS20 from Paenarthrobacter aurescens (strain TC1).